The following is a 229-amino-acid chain: Endonuclease V (229 aa).

This sequence belongs to the endonuclease V family.

It is found in the cytoplasm. The catalysed reaction is Endonucleolytic cleavage at apurinic or apyrimidinic sites to products with a 5'-phosphate.. In terms of biological role, DNA repair enzyme involved in the repair of deaminated bases. Selectively cleaves double-stranded DNA at the second phosphodiester bond 3' to a deoxyinosine leaving behind the intact lesion on the nicked DNA. This chain is Endonuclease V, found in Methanopyrus kandleri (strain AV19 / DSM 6324 / JCM 9639 / NBRC 100938).